The following is a 69-amino-acid chain: Pleurain-A3 (69 aa).

The signal sequence occupies residues 1 to 22; sequence MFTLKKTLLLLFFLGTISISLC. Residues 23–43 constitute a propeptide that is removed on maturation; sequence KQARDADEDDGRKMTEEEVKR. C63 and C69 are oxidised to a cystine.

This sequence belongs to the frog skin active peptide (FSAP) family. Pleurain subfamily. In terms of tissue distribution, expressed by the skin glands.

It localises to the secreted. Antimicrobial peptide. Has activity against Gram-positive and -negative bacteria, and fungi. Has little hemolytic activity on red blood cells. This Nidirana pleuraden (Yunnan pond frog) protein is Pleurain-A3.